The following is a 709-amino-acid chain: Phosphate acetyltransferase (709 aa).

The interval 389 to 709 (EFCYRLKILS…TIALTSIQSL (321 aa)) is phosphate acetyltransferase.

In the N-terminal section; belongs to the CobB/CobQ family. It in the C-terminal section; belongs to the phosphate acetyltransferase and butyryltransferase family. As to quaternary structure, homohexamer.

It is found in the cytoplasm. It catalyses the reaction acetyl-CoA + phosphate = acetyl phosphate + CoA. It functions in the pathway metabolic intermediate biosynthesis; acetyl-CoA biosynthesis; acetyl-CoA from acetate: step 2/2. In terms of biological role, involved in acetate metabolism. The polypeptide is Phosphate acetyltransferase (pta) (Buchnera aphidicola subsp. Schizaphis graminum (strain Sg)).